Reading from the N-terminus, the 800-residue chain is Protein PET111, mitochondrial (800 aa).

It to yeast YHR160C.

The protein localises to the mitochondrion matrix. Required for translation of the mitochondrial gene for cytochrome c oxidase subunit II (COX2). This is Protein PET111, mitochondrial (PET111) from Saccharomyces cerevisiae (strain ATCC 204508 / S288c) (Baker's yeast).